We begin with the raw amino-acid sequence, 290 residues long: MSPLVNAKKMIQNAYENHYAVAAININNLEWIKAALLAAQETNSPLLLATSEGAVKYMGGYDNCYAMVVNLIKQMNIKTPVCLHLDHGTYEGCIKAINAGYSSIMYDGSKLSIEENIKNTKELLTITKLKGVSVEVEVGSIGGTEDGITSEGELANIDDCYQMCLLDIDMLACGIGNIHGIYPKNWKGLNFNLLKEINNKVNKPIVLHGGSGISDEQILKAINLGVAKININTECQIAFSNALQDHLTKAGDLILSKQYDPRKILAYGVDAIKNTIIDKFTKFNSLNKIK.

D-glyceraldehyde 3-phosphate is bound at residue S51. Catalysis depends on D86, which acts as the Proton donor. 4 residues coordinate Zn(2+): H87, D107, E137, and H179. Residue G180 coordinates dihydroxyacetone phosphate. Residue H208 coordinates Zn(2+). Residues 209–211 and 230–233 each bind dihydroxyacetone phosphate; these read GGS and NINT.

Belongs to the class II fructose-bisphosphate aldolase family. In terms of assembly, homodimer. Zn(2+) serves as cofactor.

The enzyme catalyses beta-D-fructose 1,6-bisphosphate = D-glyceraldehyde 3-phosphate + dihydroxyacetone phosphate. Its pathway is carbohydrate degradation; glycolysis; D-glyceraldehyde 3-phosphate and glycerone phosphate from D-glucose: step 4/4. In terms of biological role, catalyzes the aldol condensation of dihydroxyacetone phosphate (DHAP or glycerone-phosphate) with glyceraldehyde 3-phosphate (G3P) to form fructose 1,6-bisphosphate (FBP) in gluconeogenesis and the reverse reaction in glycolysis. This Ureaplasma parvum serovar 3 (strain ATCC 700970) protein is Fructose-bisphosphate aldolase (fba).